Consider the following 204-residue polypeptide: High frequency lysogenization protein HflD homolog (204 aa).

Belongs to the HflD family.

It is found in the cytoplasm. Its subcellular location is the cell inner membrane. In Stenotrophomonas maltophilia (strain K279a), this protein is High frequency lysogenization protein HflD homolog.